The sequence spans 214 residues: Adenylate kinase (214 aa).

An ATP-binding site is contributed by 10-15 (GAGKGT). Positions 30 to 59 (STGDMFRAAIKAGTELGKQAKALMDEGKLV) are NMP. AMP is bound by residues T31, R36, 57–59 (KLV), 85–88 (GFPR), and Q92. Residues 122 to 159 (GRRVHQASGRSYHIVYNPPKVEGKDDVTGEDLIIRADD) form an LID region. ATP contacts are provided by residues R123 and 132–133 (SY). 2 residues coordinate AMP: R156 and R167. Q200 provides a ligand contact to ATP.

This sequence belongs to the adenylate kinase family. As to quaternary structure, monomer.

It localises to the cytoplasm. It catalyses the reaction AMP + ATP = 2 ADP. The protein operates within purine metabolism; AMP biosynthesis via salvage pathway; AMP from ADP: step 1/1. Its function is as follows. Catalyzes the reversible transfer of the terminal phosphate group between ATP and AMP. Plays an important role in cellular energy homeostasis and in adenine nucleotide metabolism. It may be linked to the biosynthesis of lipopolysaccharide surface molecules, which are important for the pathogenesis of H.influenzae. The sequence is that of Adenylate kinase from Haemophilus influenzae (strain ATCC 51907 / DSM 11121 / KW20 / Rd).